Reading from the N-terminus, the 119-residue chain is Large ribosomal subunit protein uL18 (119 aa).

It belongs to the universal ribosomal protein uL18 family. In terms of assembly, part of the 50S ribosomal subunit; part of the 5S rRNA/L5/L18/L25 subcomplex. Contacts the 5S and 23S rRNAs.

Functionally, this is one of the proteins that bind and probably mediate the attachment of the 5S RNA into the large ribosomal subunit, where it forms part of the central protuberance. In Borreliella afzelii (strain PKo) (Borrelia afzelii), this protein is Large ribosomal subunit protein uL18.